We begin with the raw amino-acid sequence, 171 residues long: MPLLDSFTVDHTRMEAPAVRVAKTMNTPHGDAITVFDLRFCVPNKEVMPERGIHTLEHLFAGFMRNHLNGNGVEIIDISPMGCRTGFYMSLIGTPDEQRVADVWKAAMEDVLKVQDQNQIPELNVYQCGTYQMHSLQEAQDIARSILERDVRINSNEELALPKEKLQELHI.

Fe cation is bound by residues H54, H58, and C128.

Belongs to the LuxS family. In terms of assembly, homodimer. Fe cation serves as cofactor.

It carries out the reaction S-(5-deoxy-D-ribos-5-yl)-L-homocysteine = (S)-4,5-dihydroxypentane-2,3-dione + L-homocysteine. In terms of biological role, involved in the synthesis of autoinducer 2 (AI-2) which is secreted by bacteria and is used to communicate both the cell density and the metabolic potential of the environment. The regulation of gene expression in response to changes in cell density is called quorum sensing. Catalyzes the transformation of S-ribosylhomocysteine (RHC) to homocysteine (HC) and 4,5-dihydroxy-2,3-pentadione (DPD). In Escherichia coli O157:H7, this protein is S-ribosylhomocysteine lyase.